We begin with the raw amino-acid sequence, 198 residues long: dITP/XTP pyrophosphatase (198 aa).

Residue 7-12 (TRNAGK) participates in substrate binding. Positions 40 and 69 each coordinate Mg(2+). Asp-69 functions as the Proton acceptor in the catalytic mechanism. Substrate contacts are provided by residues Ser-70, 152–155 (FGYD), Lys-175, and 180–181 (HR).

The protein belongs to the HAM1 NTPase family. As to quaternary structure, homodimer. Requires Mg(2+) as cofactor.

The catalysed reaction is XTP + H2O = XMP + diphosphate + H(+). It catalyses the reaction dITP + H2O = dIMP + diphosphate + H(+). It carries out the reaction ITP + H2O = IMP + diphosphate + H(+). Pyrophosphatase that catalyzes the hydrolysis of nucleoside triphosphates to their monophosphate derivatives, with a high preference for the non-canonical purine nucleotides XTP (xanthosine triphosphate), dITP (deoxyinosine triphosphate) and ITP. Seems to function as a house-cleaning enzyme that removes non-canonical purine nucleotides from the nucleotide pool, thus preventing their incorporation into DNA/RNA and avoiding chromosomal lesions. This is dITP/XTP pyrophosphatase from Exiguobacterium sibiricum (strain DSM 17290 / CCUG 55495 / CIP 109462 / JCM 13490 / 255-15).